We begin with the raw amino-acid sequence, 151 residues long: Pyruvoyl-dependent arginine decarboxylase (151 aa).

A Pyruvic acid (Ser) modification is found at S42.

The protein belongs to the PdaD family. Pyruvate serves as cofactor.

The enzyme catalyses L-arginine + H(+) = agmatine + CO2. The sequence is that of Pyruvoyl-dependent arginine decarboxylase from Methanothermobacter thermautotrophicus (strain ATCC 29096 / DSM 1053 / JCM 10044 / NBRC 100330 / Delta H) (Methanobacterium thermoautotrophicum).